A 500-amino-acid chain; its full sequence is Probable betaine aldehyde dehydrogenase (500 aa).

Residue 249 to 254 (GSLATG) coordinates NAD(+). Catalysis depends on Glu-271, which acts as the Proton acceptor. Cys-305 functions as the Nucleophile in the catalytic mechanism.

Belongs to the aldehyde dehydrogenase family.

It carries out the reaction betaine aldehyde + NAD(+) + H2O = glycine betaine + NADH + 2 H(+). Its pathway is amine and polyamine biosynthesis; betaine biosynthesis via choline pathway; betaine from betaine aldehyde: step 1/1. The protein is Probable betaine aldehyde dehydrogenase (meu8) of Schizosaccharomyces pombe (strain 972 / ATCC 24843) (Fission yeast).